An 837-amino-acid chain; its full sequence is GRIP1-associated protein 1 (837 aa).

Residue alanine 2 is modified to N-acetylalanine. Positions 4 to 158 form a coiled coil; it reads ALSEEEFQRM…ALQERYGKEA (155 aa). Disordered regions lie at residues 161–180, 555–577, 647–666, and 677–702; these read PSAV…PISL, KGKE…ERDG, SEMN…VSSF, and SSAI…LSDE. Residues 204–637 are a coiled coil; sequence EQLQGLESSK…LQEILTNSKS (434 aa). The span at 648-666 shows a compositional bias: polar residues; that stretch reads EMNSPSRTQTGDSSSVSSF. A phosphoserine mark is found at serine 651, serine 662, serine 664, serine 665, serine 684, serine 686, serine 687, and serine 688. Residues 678 to 690 show a composition bias toward low complexity; sequence SAIPARSLSSSPQ. Coiled coils occupy residues 697-731 and 781-810; these read AELS…LEVS and DENL…KDME. A Phosphoserine modification is found at serine 826.

Interacts with GRIP1, GRIP2 and AMPA receptors. Interacts (via C-terminus) with MAPK8/JNK1 and with MAP3K1/MEKK1; the interaction promotes MAP3K1-mediated phosphorylation of MAPK8. Interacts (via N-terminus) with RAB4A (in GTP-bound form). Interacts (via C-terminus) with STX12. Proteolytically cleaved by caspase-3. A minor C-terminal proteolytic fragment of 30 kDa is produced. Proteolytic cleavage is required for JNK signaling activation. As to expression, expressed in the central nervous system; especially in neurons.

The protein resides in the early endosome membrane. The protein localises to the recycling endosome membrane. Its subcellular location is the cell projection. It is found in the axon. It localises to the dendrite. The protein resides in the synapse. Functionally, regulates the endosomal recycling back to the neuronal plasma membrane, possibly by connecting early and late recycling endosomal domains and promoting segregation of recycling endosomes from early endosomal membranes. Involved in the localization of recycling endosomes to dendritic spines, thereby playing a role in the maintenance of dendritic spine morphology. Required for the activity-induced AMPA receptor recycling to dendrite membranes and for long-term potentiation and synaptic plasticity. In terms of biological role, functions as a scaffold protein in neurons to facilitate MAP3K1/MEKK1-mediated activation of the JNK1 kinase by phosphorylation, possibly by bringing MAP3K1/MEKK1 and JNK1 in close proximity. The sequence is that of GRIP1-associated protein 1 (Gripap1) from Rattus norvegicus (Rat).